A 464-amino-acid chain; its full sequence is Cyclic 2,3-diphosphoglycerate synthetase (464 aa).

The protein belongs to the cyclic 2,3-diphosphoglycerate synthetase family.

It localises to the cytoplasm. The enzyme catalyses (2R)-2,3-bisphosphoglycerate + ATP + H(+) = cyclic (2R)-2,3-bisphosphoglycerate + ADP + phosphate. Its activity is regulated as follows. Activity decreases in response to phosphate limitation. Functionally, catalyzes the formation of cyclic 2,3-diphosphoglycerate (cDPG) by formation of an intramolecular phosphoanhydride bond at the expense of ATP. Not able to catalyze cDPG hydrolysis. May be involved in osmotic balance. The protein is Cyclic 2,3-diphosphoglycerate synthetase (cpgS) of Methanothermobacter thermautotrophicus (strain ATCC 29096 / DSM 1053 / JCM 10044 / NBRC 100330 / Delta H) (Methanobacterium thermoautotrophicum).